The primary structure comprises 82 residues: MDPIISAASVIGAGLSIGLAAIGPGIGQGTAAGQAVEGIARQPEAENKIRGVLLLSLAFMEALTIYGLVVALALLFANPFNT.

The next 2 membrane-spanning stretches (helical) occupy residues 3–23 and 57–77; these read PIIS…AAIG and LAFM…LLFA.

Belongs to the ATPase C chain family. In terms of assembly, F-type ATPases have 2 components, F(1) - the catalytic core - and F(0) - the membrane proton channel. F(1) has five subunits: alpha(3), beta(3), gamma(1), delta(1), epsilon(1). F(0) has four main subunits: a(1), b(1), b'(1) and c(10-14). The alpha and beta chains form an alternating ring which encloses part of the gamma chain. F(1) is attached to F(0) by a central stalk formed by the gamma and epsilon chains, while a peripheral stalk is formed by the delta, b and b' chains.

It localises to the plastid. The protein resides in the chloroplast thylakoid membrane. In terms of biological role, f(1)F(0) ATP synthase produces ATP from ADP in the presence of a proton or sodium gradient. F-type ATPases consist of two structural domains, F(1) containing the extramembraneous catalytic core and F(0) containing the membrane proton channel, linked together by a central stalk and a peripheral stalk. During catalysis, ATP synthesis in the catalytic domain of F(1) is coupled via a rotary mechanism of the central stalk subunits to proton translocation. Key component of the F(0) channel; it plays a direct role in translocation across the membrane. A homomeric c-ring of between 10-14 subunits forms the central stalk rotor element with the F(1) delta and epsilon subunits. The chain is ATP synthase subunit c, chloroplastic from Phaeodactylum tricornutum (strain CCAP 1055/1).